A 150-amino-acid polypeptide reads, in one-letter code: Small ribosomal subunit protein eS19 (150 aa).

Belongs to the eukaryotic ribosomal protein eS19 family. Part of the 30S ribosomal subunit.

Its function is as follows. May be involved in maturation of the 30S ribosomal subunit. This chain is Small ribosomal subunit protein eS19, found in Thermococcus kodakarensis (strain ATCC BAA-918 / JCM 12380 / KOD1) (Pyrococcus kodakaraensis (strain KOD1)).